The sequence spans 199 residues: Probable cobalt-precorrin-6B C(15)-methyltransferase (decarboxylating) (199 aa).

S-adenosyl-L-methionine-binding positions include Thr-24, 48–52 (GCGTG), Asp-72, and Ala-101.

This sequence belongs to the methyltransferase superfamily. Archaeal-type CbiT family.

It carries out the reaction Co-precorrin-6B + S-adenosyl-L-methionine = Co-precorrin-7 + S-adenosyl-L-homocysteine + CO2. It participates in cofactor biosynthesis; adenosylcobalamin biosynthesis; cob(II)yrinate a,c-diamide from sirohydrochlorin (anaerobic route): step 8/10. In terms of biological role, catalyzes the methylation of C-15 in cobalt-precorrin-6B followed by the decarboxylation of C-12 to form cobalt-precorrin-7. The protein is Probable cobalt-precorrin-6B C(15)-methyltransferase (decarboxylating) of Saccharolobus islandicus (strain L.S.2.15 / Lassen #1) (Sulfolobus islandicus).